A 230-amino-acid polypeptide reads, in one-letter code: Cytidylate kinase (230 aa).

12-20 (GPSGTGKST) contributes to the ATP binding site.

This sequence belongs to the cytidylate kinase family. Type 1 subfamily.

It is found in the cytoplasm. It catalyses the reaction CMP + ATP = CDP + ADP. It carries out the reaction dCMP + ATP = dCDP + ADP. The polypeptide is Cytidylate kinase (Corynebacterium efficiens (strain DSM 44549 / YS-314 / AJ 12310 / JCM 11189 / NBRC 100395)).